The primary structure comprises 87 residues: Putative defensin-like protein 317 (87 aa).

A signal peptide spans 1–24; that stretch reads MKSFLVAFLIVLVFFCVEMKIGNG. 3 cysteine pairs are disulfide-bonded: C38–C71, C47–C80, and C56–C82.

The protein belongs to the DEFL family.

The protein localises to the secreted. In Arabidopsis thaliana (Mouse-ear cress), this protein is Putative defensin-like protein 317.